The primary structure comprises 336 residues: Holliday junction branch migration complex subunit RuvB (336 aa).

The tract at residues 1–182 is large ATPase domain (RuvB-L); the sequence is MKERIVNLET…FGMSFRMQFY (182 aa). ATP contacts are provided by residues leucine 21, arginine 22, glycine 63, lysine 66, threonine 67, serine 68, 129 to 131, arginine 172, tyrosine 182, and arginine 219; that span reads EDF. Threonine 67 provides a ligand contact to Mg(2+). Residues 183–253 form a small ATPAse domain (RuvB-S) region; that stretch reads SPSELSLIIK…ITLHALNELG (71 aa). Residues 256–336 are head domain (RuvB-H); it reads ELGFDEADLA…IPTLNPQTLF (81 aa). The DNA site is built by arginine 310 and arginine 315.

This sequence belongs to the RuvB family. As to quaternary structure, homohexamer. Forms an RuvA(8)-RuvB(12)-Holliday junction (HJ) complex. HJ DNA is sandwiched between 2 RuvA tetramers; dsDNA enters through RuvA and exits via RuvB. An RuvB hexamer assembles on each DNA strand where it exits the tetramer. Each RuvB hexamer is contacted by two RuvA subunits (via domain III) on 2 adjacent RuvB subunits; this complex drives branch migration. In the full resolvosome a probable DNA-RuvA(4)-RuvB(12)-RuvC(2) complex forms which resolves the HJ.

It is found in the cytoplasm. It carries out the reaction ATP + H2O = ADP + phosphate + H(+). The RuvA-RuvB-RuvC complex processes Holliday junction (HJ) DNA during genetic recombination and DNA repair, while the RuvA-RuvB complex plays an important role in the rescue of blocked DNA replication forks via replication fork reversal (RFR). RuvA specifically binds to HJ cruciform DNA, conferring on it an open structure. The RuvB hexamer acts as an ATP-dependent pump, pulling dsDNA into and through the RuvAB complex. RuvB forms 2 homohexamers on either side of HJ DNA bound by 1 or 2 RuvA tetramers; 4 subunits per hexamer contact DNA at a time. Coordinated motions by a converter formed by DNA-disengaged RuvB subunits stimulates ATP hydrolysis and nucleotide exchange. Immobilization of the converter enables RuvB to convert the ATP-contained energy into a lever motion, pulling 2 nucleotides of DNA out of the RuvA tetramer per ATP hydrolyzed, thus driving DNA branch migration. The RuvB motors rotate together with the DNA substrate, which together with the progressing nucleotide cycle form the mechanistic basis for DNA recombination by continuous HJ branch migration. Branch migration allows RuvC to scan DNA until it finds its consensus sequence, where it cleaves and resolves cruciform DNA. In Helicobacter pylori (strain J99 / ATCC 700824) (Campylobacter pylori J99), this protein is Holliday junction branch migration complex subunit RuvB.